Reading from the N-terminus, the 347-residue chain is Quinolinate synthase (347 aa).

Positions 47 and 68 each coordinate iminosuccinate. [4Fe-4S] cluster is bound at residue Cys113. Iminosuccinate is bound by residues 139–141 (YAN) and Ser156. Residue Cys200 coordinates [4Fe-4S] cluster. Residues 226 to 228 (HPE) and Thr243 contribute to the iminosuccinate site. Residue Cys297 participates in [4Fe-4S] cluster binding.

Belongs to the quinolinate synthase family. Type 1 subfamily. It depends on [4Fe-4S] cluster as a cofactor.

It localises to the cytoplasm. It catalyses the reaction iminosuccinate + dihydroxyacetone phosphate = quinolinate + phosphate + 2 H2O + H(+). It functions in the pathway cofactor biosynthesis; NAD(+) biosynthesis; quinolinate from iminoaspartate: step 1/1. In terms of biological role, catalyzes the condensation of iminoaspartate with dihydroxyacetone phosphate to form quinolinate. This chain is Quinolinate synthase, found in Escherichia coli O157:H7.